Here is a 555-residue protein sequence, read N- to C-terminus: Solute carrier family 22 member 2 (555 aa).

Residues methionine 1–threonine 21 are Cytoplasmic-facing. Residues phenylalanine 22–leucine 42 traverse the membrane as a helical segment. The Extracellular portion of the chain corresponds to glycine 43–aspartate 150. Asparagine 71 carries N-linked (GlcNAc...) asparagine glycosylation. The chain crosses the membrane as a helical span at residues leucine 151–alanine 171. The Cytoplasmic segment spans residues aspartate 172 to lysine 177. Residues phenylalanine 178–proline 198 traverse the membrane as a helical segment. At asparagine 199–glutamine 210 the chain is on the extracellular side. The chain crosses the membrane as a helical span at residues glycine 211–leucine 231. The Cytoplasmic segment spans residues glycine 232–glycine 238. Residues isoleucine 239–isoleucine 259 form a helical membrane-spanning segment. The Extracellular segment spans residues proline 260 to arginine 263. A helical transmembrane segment spans residues tryptophan 264–proline 284. The Proline-rich sequence motif lies at proline 284–arginine 288. At glutamate 285 to threonine 348 the chain is on the cytoplasmic side. Residues leucine 349 to methionine 369 traverse the membrane as a helical segment. Residues glycine 370–asparagine 375 are Extracellular-facing. A helical membrane pass occupies residues isoleucine 376–leucine 396. Residues threonine 397 to arginine 404 lie on the Cytoplasmic side of the membrane. A helical membrane pass occupies residues tyrosine 405 to proline 425. Residues aspartate 426–lysine 432 lie on the Extracellular side of the membrane. Residues isoleucine 433 to valine 453 form a helical membrane-spanning segment. Over asparagine 454–asparagine 464 the chain is Cytoplasmic. A helical transmembrane segment spans residues leucine 465 to valine 485. At tyrosine 486–glutamate 494 the chain is on the extracellular side. Residues phenylalanine 495–proline 515 form a helical membrane-spanning segment. Residues glutamate 516–serine 555 lie on the Cytoplasmic side of the membrane.

It belongs to the major facilitator (TC 2.A.1) superfamily. Organic cation transporter (TC 2.A.1.19) family. Tyrosine phosphorylated. In terms of tissue distribution, expressed in the kidney, in the proximal tubules of cortex and of the outer medulla. In brain, highly expressed predominantly in regions located at the brain-cerebrospinal fluid border, in the leptomeninges, in the choroid plexus and in a layer boarding the third ventricle. In brain, also observed in the granular cell layer of the cerebellum and in the granular layer and pyramidal cells of the hippocampus in the CA1-CA3 regions. Expressed in tracheal and bronchial ciliated epithelium in the respiratory tract. Expression is greater in the kidney of male than of female.

It localises to the basolateral cell membrane. It is found in the basal cell membrane. The protein localises to the apical cell membrane. The enzyme catalyses (R)-noradrenaline(out) = (R)-noradrenaline(in). It carries out the reaction (R)-adrenaline(out) = (R)-adrenaline(in). It catalyses the reaction serotonin(out) = serotonin(in). The catalysed reaction is dopamine(out) = dopamine(in). The enzyme catalyses histamine(out) = histamine(in). It carries out the reaction thiamine(in) = thiamine(out). It catalyses the reaction creatinine(in) = creatinine(out). The catalysed reaction is 1-methylnicotinamide(out) = 1-methylnicotinamide(in). The enzyme catalyses guanidine(out) = guanidine(in). It carries out the reaction choline(out) = choline(in). It catalyses the reaction agmatine(out) = agmatine(in). The catalysed reaction is putrescine(out) = putrescine(in). The enzyme catalyses spermidine(in) = spermidine(out). It carries out the reaction tyramine(in) = tyramine(out). It catalyses the reaction L-histidyl-L-proline diketopiperazine(in) = L-histidyl-L-proline diketopiperazine(out). The catalysed reaction is (R)-salsolinol(in) = (R)-salsolinol(out). The enzyme catalyses N-methyl-(R)-salsolinol(in) = N-methyl-(R)-salsolinol(out). It carries out the reaction acetylcholine(in) = acetylcholine(out). It catalyses the reaction prostaglandin F2alpha(out) = prostaglandin F2alpha(in). The catalysed reaction is prostaglandin E2(out) = prostaglandin E2(in). With respect to regulation, tyrosine phosphorylation of the transporter leads to activation of the transport activity. Inhibited by cGMP, most likely through a cGMP-binding protein that interacts with OCT2. Its function is as follows. Electrogenic voltage-dependent transporter that mediates the transport of a variety of organic cations such as endogenous bioactive amines, cationic drugs and xenobiotics. Functions as a Na(+)-independent, bidirectional uniporter. Cation cellular uptake or release is driven by the electrochemical potential, i.e. membrane potential and concentration gradient. However, may also engage electroneutral cation exchange when saturating concentrations of cation substrates are reached. Predominantly expressed at the basolateral membrane of hepatocytes and proximal tubules and involved in the uptake and disposition of cationic compounds by hepatic and renal clearance from the blood flow. Implicated in monoamine neurotransmitters uptake such as histamine, dopamine, adrenaline/epinephrine, noradrenaline/norepinephrine, serotonin and tyramine, thereby supporting a physiological role in the central nervous system by regulating interstitial concentrations of neurotransmitters. Also capable of transporting dopaminergic neuromodulators cyclo(his-pro), salsolinol and N-methyl-salsolinol, thereby involved in the maintenance of dopaminergic cell integrity in the central nervous system. Mediates the bidirectional transport of acetylcholine (ACh) at the apical membrane of ciliated cell in airway epithelium, thereby playing a role in luminal release of ACh from bronchial epithelium. Also transports guanidine and endogenous monoamines such as vitamin B1/thiamine, creatinine and N-1-methylnicotinamide (NMN). Mediates the uptake and efflux of quaternary ammonium compound choline. Mediates the bidirectional transport of polyamine agmatine and the uptake of polyamine putrescine. Able to transport non-amine endogenous compounds such as prostaglandin E2 (PGE2) and prostaglandin F2-alpha (PGF2-alpha). Also involved in the uptake of xenobiotic 4-(4-(dimethylamino)styryl)-N-methylpyridinium (ASP). May contribute to regulate the transport of organic compounds in testis across the blood-testis-barrier. The protein is Solute carrier family 22 member 2 of Rattus norvegicus (Rat).